Here is a 260-residue protein sequence, read N- to C-terminus: 3'-5' ssDNA/RNA exonuclease TatD (260 aa).

Residues glutamate 91, histidine 127, and histidine 152 each contribute to the a divalent metal cation site.

This sequence belongs to the metallo-dependent hydrolases superfamily. TatD-type hydrolase family. TatD subfamily. In terms of assembly, monomer. Requires Mg(2+) as cofactor. Mn(2+) is required as a cofactor.

It localises to the cytoplasm. 3'-5' exonuclease that prefers single-stranded DNA and RNA. May play a role in the H(2)O(2)-induced DNA damage repair. The chain is 3'-5' ssDNA/RNA exonuclease TatD from Escherichia coli (strain K12).